Reading from the N-terminus, the 220-residue chain is MAYPGYGGAFGNFSGQIPGMQMQMGQPMPGAGPNMFSGGYPGYLGYSDSYSPADDSMWTYFTAVAGQDGEVDAEELQRCLTQSGISGTYAPFSLETCRIMIAMLDRDYTGKMGFNEFKELWAALNAWKQNFMTIDQDQSGTVEHHELSQAIALMGYRLSPQTLAAIVRRYSKNGRIFFDDYVACCVKLRALTDFFRRRDHLQQGIVNFMYEDFLQGTMTI.

4 consecutive EF-hand domains span residues 51–86 (SPAD…SGIS), 92–127 (FSLE…LNAW), 122–157 (AALN…MGYR), and 158–193 (LSPQ…ALTD). The Ca(2+) site is built by D105, D107, T109, K111, E116, D135, D137, S139, T141, and E146.

In terms of assembly, homodimer. Interacts with SRI and LCP1.

Its subcellular location is the cytoplasm. The protein localises to the cytoplasmic granule membrane. Its function is as follows. Calcium-binding protein that may play a role in the adhesion of neutrophils to fibronectin. May play a role in the formation of focal adhesions. The polypeptide is Grancalcin (Gca) (Mus musculus (Mouse)).